The primary structure comprises 495 residues: Bile acid-sensitive ion channel (495 aa).

The binds the plasma membrane and stabilizes the channel in the closed state stretch occupies residues M1–S30. Topologically, residues M1–R61 are cytoplasmic. The chain crosses the membrane as a helical span at residues K62 to S82. The Extracellular segment spans residues R83 to T459. Intrachain disulfides connect C112-C207, C185-C192, C298-C377, C315-C373, C328-C350, and C330-C342. N147 and N163 each carry an N-linked (GlcNAc...) asparagine glycan. The N-linked (GlcNAc...) asparagine glycan is linked to N306. N-linked (GlcNAc...) asparagine glycans are attached at residues N370, N405, and N421. The GAS motif; ion selectivity filter motif lies at G454–S456. The chain crosses the membrane as a helical span at residues I460–L480. Over K481–V495 the chain is Cytoplasmic.

It belongs to the amiloride-sensitive sodium channel (TC 1.A.6) family. ASIC5 subfamily. As to quaternary structure, forms homotrimeric channels. As to expression, expressed by cholangiocytes (at protein level). Detected in brain, liver, duodenum, jejunum, ileum and testis.

The protein localises to the apical cell membrane. It localises to the cell membrane. The catalysed reaction is Na(+)(in) = Na(+)(out). The enzyme catalyses Li(+)(in) = Li(+)(out). It catalyses the reaction K(+)(in) = K(+)(out). It carries out the reaction H(+)(in) = H(+)(out). Its activity is regulated as follows. Inhibited by the diuretic drug amiloride. Inhibited by diminazene. Inhibited by extracellular Ca(2+). Its function is as follows. Forms bile acid-gated sodium channels and may play a role in bile acid-dependent absorption and secretion by epithelial cells of the bile ducts. Displays high selectivity for sodium ions but can also permit the permeation of other cations. The gating could be indirect and the consequence of alterations of the membrane environment of the channel by bile acids. As a sodium channel of type II unipolar brush cells of the vestibulocerebellum, controlling the electrical activity of these cells, could play a role in motor coordination and balance. The protein is Bile acid-sensitive ion channel of Rattus norvegicus (Rat).